The primary structure comprises 546 residues: Pectinesterase 1 (546 aa).

Residues 1–39 form the signal peptide; sequence MANPQQPLLIKTHKQNPIISFKILSFVITLFVALFLVAP. A propeptide spanning residues 40 to 229 is cleaved from the precursor; the sequence is YQVEIKHSNL…RKLMESSGKD (190 aa). Substrate-binding residues include threonine 308 and glutamine 338. A disulfide bridge connects residues cysteine 327 and cysteine 354. Catalysis depends on aspartate 361, which acts as the Proton donor. Aspartate 382 serves as the catalytic Nucleophile. An intrachain disulfide couples cysteine 395 to cysteine 429. Substrate is bound by residues arginine 450 and tryptophan 452.

This sequence in the N-terminal section; belongs to the PMEI family. It in the C-terminal section; belongs to the pectinesterase family.

The protein localises to the secreted. It localises to the cell wall. It catalyses the reaction [(1-&gt;4)-alpha-D-galacturonosyl methyl ester](n) + n H2O = [(1-&gt;4)-alpha-D-galacturonosyl](n) + n methanol + n H(+). The protein operates within glycan metabolism; pectin degradation; 2-dehydro-3-deoxy-D-gluconate from pectin: step 1/5. Pectinesterase may play a role in cell wall metabolism during fruit growth and development prior to ripening and may be required for preparing cell walls for softening by polygalacturonase during fruit ripening. This Solanum lycopersicum (Tomato) protein is Pectinesterase 1 (PME1.9).